Reading from the N-terminus, the 44-residue chain is Antibacterial protein 3 homolog (44 aa).

Belongs to the staphylococcal hemolytic protein family.

The protein resides in the secreted. In terms of biological role, has hemolytic activity and also inhibits the growth of gonococci. This chain is Antibacterial protein 3 homolog, found in Staphylococcus haemolyticus (strain JCSC1435).